The following is a 378-amino-acid chain: H repeat-associated putative transposase YhhI (378 aa).

The protein belongs to the transposase 11 family.

The polypeptide is H repeat-associated putative transposase YhhI (yhhI) (Escherichia coli (strain K12)).